We begin with the raw amino-acid sequence, 334 residues long: Fructose-1,6-bisphosphatase class 1 (334 aa).

E89, D112, L114, and D115 together coordinate Mg(2+). Substrate contacts are provided by residues 115–118 (DGSS), N208, Y241, and K271. E277 provides a ligand contact to Mg(2+).

This sequence belongs to the FBPase class 1 family. Homotetramer. The cofactor is Mg(2+).

It localises to the cytoplasm. It catalyses the reaction beta-D-fructose 1,6-bisphosphate + H2O = beta-D-fructose 6-phosphate + phosphate. It functions in the pathway carbohydrate biosynthesis; gluconeogenesis. The sequence is that of Fructose-1,6-bisphosphatase class 1 from Serratia proteamaculans (strain 568).